A 439-amino-acid polypeptide reads, in one-letter code: Protein translocase subunit SecY (439 aa).

A run of 10 helical transmembrane segments spans residues 23-43 (IASV…PIPG), 77-97 (IFAL…LLTL), 125-145 (LVLA…ISGM), 154-174 (FYFY…LMWL), 187-207 (ISII…VHTI), 217-237 (ILLF…VVFI), 274-294 (VIPA…ISWF), 317-337 (YLIL…GLVF), 369-389 (IMIR…LIPE), and 397-417 (VPFY…MDFI).

Belongs to the SecY/SEC61-alpha family. In terms of assembly, component of the Sec protein translocase complex. Heterotrimer consisting of SecY, SecE and SecG subunits. The heterotrimers can form oligomers, although 1 heterotrimer is thought to be able to translocate proteins. Interacts with the ribosome. Interacts with SecDF, and other proteins may be involved. Interacts with SecA.

Its subcellular location is the cell membrane. Functionally, the central subunit of the protein translocation channel SecYEG. Consists of two halves formed by TMs 1-5 and 6-10. These two domains form a lateral gate at the front which open onto the bilayer between TMs 2 and 7, and are clamped together by SecE at the back. The channel is closed by both a pore ring composed of hydrophobic SecY resides and a short helix (helix 2A) on the extracellular side of the membrane which forms a plug. The plug probably moves laterally to allow the channel to open. The ring and the pore may move independently. The chain is Protein translocase subunit SecY from Buchnera aphidicola subsp. Schizaphis graminum (strain Sg).